The following is a 548-amino-acid chain: MKKVTAMLFSMAVGLNAVSMAAKAKASEEQETDVLLIGGGIMSATLGTYLRELEPEWSMTMVERLEGVAQESSNGWNNAGTGHSALMELNYTPQNADGSISIEKAVAINEAFQISRQFWAHQVERGVLRTPRSFINTVPHMSFVWGEDNVNFLRARYAALQQSSLFRGMRYSEDHAQIKEWAPLVMEGRDPQQKVAATRTEIGTDVNYGEITRQLIASLQKKSNFSLQLSSEVRALKRNDDNTWTVTVADLKNGTAQNIRAKFVFIGAGGAALKLLQESGIPEAKDYAGFPVGGQFLVSENPDVVNHHLAKVYGKASVGAPPMSVPHIDTRVLDGKRVVLFGPFATFSTKFLKNGSLWDLMSSTTTSNVMPMMHVGLDNFDLVKYLVSQVMLSEEDRFEALKEYYPQAKKEDWRLWQAGQRVQIIKRDAEKGGVLRLGTEVVSDQQGTIAALLGASPGASTAAPIMLDLLEKVFGDRVSSPQWQAMLKAIVPSYGRKLNGDVAATERELQYTSEVLGLKYDKPQAADSTPKPQLKPKPVQKEVADIAL.

A disordered region spans residues 522–548 (KPQAADSTPKPQLKPKPVQKEVADIAL). The segment covering 539–548 (VQKEVADIAL) has biased composition (basic and acidic residues).

This sequence belongs to the MQO family. FAD serves as cofactor.

The catalysed reaction is (S)-malate + a quinone = a quinol + oxaloacetate. It functions in the pathway carbohydrate metabolism; tricarboxylic acid cycle; oxaloacetate from (S)-malate (quinone route): step 1/1. In Escherichia coli O9:H4 (strain HS), this protein is Probable malate:quinone oxidoreductase.